Consider the following 195-residue polypeptide: MARSAAIERITKETQIKLSLEIDGKGEAQICTSVPFLDHMLDLFARHGLFDLKVEAHGDIDIDFHHTVEDIGIVLGAAFKEALGDKCGIRRYGNAVVPMDEVLASVATDLSGRPYLVYNVQLPKVKIGDFDVELVREFFQGFVNHCGANLHLNLMYGDNVHHIVEACFKAAARALDQATQLDARIEGVMSTKGKL.

The protein belongs to the imidazoleglycerol-phosphate dehydratase family.

Its subcellular location is the cytoplasm. It catalyses the reaction D-erythro-1-(imidazol-4-yl)glycerol 3-phosphate = 3-(imidazol-4-yl)-2-oxopropyl phosphate + H2O. It functions in the pathway amino-acid biosynthesis; L-histidine biosynthesis; L-histidine from 5-phospho-alpha-D-ribose 1-diphosphate: step 6/9. The chain is Imidazoleglycerol-phosphate dehydratase from Geobacter sp. (strain M21).